We begin with the raw amino-acid sequence, 145 residues long: Cytochrome b (145 aa).

A helical membrane pass occupies residues 38 to 58 (FFALHFLLPFVLAALALMHLI). Residues His42 and His56 each contribute to the heme b site. His61 contacts a ubiquinone. Residues 85 to 105 (FIFKDLVTIFIFFIVLSIFVF) form a helical membrane-spanning segment.

This sequence belongs to the cytochrome b family. In terms of assembly, fungal cytochrome b-c1 complex contains 10 subunits; 3 respiratory subunits, 2 core proteins and 5 low-molecular weight proteins. Cytochrome b-c1 complex is a homodimer. The cofactor is heme b.

It localises to the mitochondrion inner membrane. Its function is as follows. Component of the ubiquinol-cytochrome c reductase complex (complex III or cytochrome b-c1 complex) that is part of the mitochondrial respiratory chain. The b-c1 complex mediates electron transfer from ubiquinol to cytochrome c. Contributes to the generation of a proton gradient across the mitochondrial membrane that is then used for ATP synthesis. This is Cytochrome b (cob) from Aspergillus flavus.